We begin with the raw amino-acid sequence, 83 residues long: U25-theraphotoxin-Cg1a (83 aa).

The N-terminal stretch at 1-23 (MRFHTLLFLSFLLLVSCALICTA) is a signal peptide. The propeptide occupies 24-48 (QHPGLEKSGMFHENVGKGQHIEEKR). 3 cysteine pairs are disulfide-bonded: Cys-50-Cys-66, Cys-57-Cys-71, and Cys-65-Cys-81.

The protein belongs to the neurotoxin 07 (Beta/delta-agtx) family. 03 (aga-4) subfamily. JZTX sub-subfamily. As to expression, expressed by the venom gland.

Its subcellular location is the secreted. Inhibits TTX-sensitive sodium currents in rat dorsal root ganglion (DRG) neurons. The polypeptide is U25-theraphotoxin-Cg1a (Chilobrachys guangxiensis (Chinese earth tiger tarantula)).